A 1167-amino-acid polypeptide reads, in one-letter code: Topoisomerase 1-associated factor 1 (1167 aa).

Disordered regions lie at residues 332-353 (SKRW…NNDF), 563-594 (SRRR…DYAE), 889-969 (KYSH…LENT), 981-1093 (YVHA…DAID), and 1105-1167 (FDDD…SDSE). The span at 572-582 (REEQLVNKGSD) shows a compositional bias: basic and acidic residues. Composition is skewed to acidic residues over residues 583 to 593 (EEQESEDEDYA) and 949 to 958 (EEEPVDEETL). Composition is skewed to basic and acidic residues over residues 959-969 (EERRQARLENT) and 996-1013 (EFFR…ERIK). Residues 1062-1074 (ELEEDDILMDDME) are compositionally biased toward acidic residues. The segment covering 1078–1088 (RASSGEYSSND) has biased composition (polar residues). Over residues 1110–1127 (AFGRDRDKDETSVDRDGA) the composition is skewed to basic and acidic residues.

Belongs to the timeless family.

It localises to the nucleus. In terms of biological role, involved in chromosome segregation during meiosis and DNA damage repair. This chain is Topoisomerase 1-associated factor 1 (tof1), found in Emericella nidulans (strain FGSC A4 / ATCC 38163 / CBS 112.46 / NRRL 194 / M139) (Aspergillus nidulans).